The chain runs to 255 residues: UPF0246 protein DP0358 (255 aa).

The protein belongs to the UPF0246 family.

In Desulfotalea psychrophila (strain LSv54 / DSM 12343), this protein is UPF0246 protein DP0358.